We begin with the raw amino-acid sequence, 487 residues long: Glutamyl-tRNA(Gln) amidotransferase subunit A (487 aa).

Catalysis depends on charge relay system residues lysine 78 and serine 153. The active-site Acyl-ester intermediate is serine 177.

This sequence belongs to the amidase family. GatA subfamily. Heterotrimer of A, B and C subunits.

The catalysed reaction is L-glutamyl-tRNA(Gln) + L-glutamine + ATP + H2O = L-glutaminyl-tRNA(Gln) + L-glutamate + ADP + phosphate + H(+). In terms of biological role, allows the formation of correctly charged Gln-tRNA(Gln) through the transamidation of misacylated Glu-tRNA(Gln) in organisms which lack glutaminyl-tRNA synthetase. The reaction takes place in the presence of glutamine and ATP through an activated gamma-phospho-Glu-tRNA(Gln). The chain is Glutamyl-tRNA(Gln) amidotransferase subunit A from Oenococcus oeni (strain ATCC BAA-331 / PSU-1).